A 957-amino-acid chain; its full sequence is MADPAECSIKVMCRFRPLNEAEILRGDKFIPKFKGDETVVIGQGKPYVFDRVLPPNTTQEQVYNACAKQIVKDVLEGYNGTIFAYGQTSSGKTHTMEGKLHDPQLMGIIPRIAHDIFDHIYSMDENLEFHIKVSYFEIYLDKIRDLLDVSKTNLAVHEDKNRVPYVKGCTERFVSSPEEVMDVIDEGKANRHVAVTNMNEHSSRSHSIFLINIKQENVETEKKLSGKLYLVDLAGSEKVSKTGAEGAVLDEAKNINKSLSALGNVISALAEGTKTHVPYRDSKMTRILQDSLGGNCRTTIVICCSPSVFNEAETKSTLMFGQRAKTIKNTVSVNLELTAEEWKKKYEKEKEKNKTLKNVIQHLEMELNRWRNGEAVPEDEQISAKDQKNLEPCDNTPIIDNIAPVVAGISTEEKEKYDEEISSLYRQLDDKDDEINQQSQLAEKLKQQMLDQDELLASTRRDYEKIQEELTRLQIENEAAKDEVKEVLQALEELAVNYDQKSQEVEDKTRANEQLTDELAQKTTTLTTTQRELSQLQELSNHQKKRATEILNLLLKDLGEIGGIIGTNDVKTLADVNGVIEEEFTMARLYISKMKSEVKSLVNRSKQLESAQMDSNRKMNASERELAACQLLISQHEAKIKSLTDYMQNMEQKRRQLEESQDSLSEELAKLRAQEKMHEVSFQDKEKEHLTRLQDAEEMKKALEQQMESHREAHQKQLSRLRDEIEEKQKIIDEIRDLNQKLQLEQEKLSSDYNKLKIEDQEREMKLEKLLLLNDKREQAREDLKGLEETVSRELQTLHNLRKLFVQDLTTRVKKSVELDNDDGGGSAAQKQKISFLENNLEQLTKVHKQLVRDNADLRCELPKLEKRLRATAERVKALESALKEAKENAMRDRKRYQQEVDRIKEAVRAKNMARRAHSAQIAKPIRPGHYPASSPTAVHAIRGGGGSSSNSTHYQK.

In terms of domain architecture, Kinesin motor spans S8–I327. 8 residues coordinate ATP: Q87, S89, S90, G91, K92, T93, H94, and K99. The interval V174 to K315 is microtubule-binding. Residues V406 to A923 are a coiled coil. The interval R859–Q956 is globular. A disordered region spans residues K911 to K957.

The protein belongs to the TRAFAC class myosin-kinesin ATPase superfamily. Kinesin family. Kinesin subfamily. In terms of assembly, oligomer composed of two heavy chains and two light chains. Interacts with GRIP1 and KLC3. Interacts with TRAK1. Interacts with ZFYVE27. In terms of tissue distribution, highest expression in brain, prostate and testis, and moderate expression in kidney, small intestine and ovary.

The protein localises to the cytoplasm. It localises to the cytoskeleton. Its subcellular location is the cell projection. The protein resides in the dendrite. It catalyses the reaction ATP + H2O = ADP + phosphate + H(+). Its function is as follows. Microtubule-associated force-producing protein that may play a role in organelle transport. Has ATPase activity. Involved in synaptic transmission. Mediates dendritic trafficking of mRNAs. Required for anterograde axonal transportation of MAPK8IP3/JIP3 which is essential for MAPK8IP3/JIP3 function in axon elongation. The protein is Kinesin heavy chain isoform 5C (KIF5C) of Homo sapiens (Human).